The chain runs to 156 residues: 6,7-dimethyl-8-ribityllumazine synthase (156 aa).

Residues Phe-25, 59-61 (AFE), and 83-85 (AVI) each bind 5-amino-6-(D-ribitylamino)uracil. 88 to 89 (AT) contributes to the (2S)-2-hydroxy-3-oxobutyl phosphate binding site. Catalysis depends on His-91, which acts as the Proton donor. Residue Phe-116 participates in 5-amino-6-(D-ribitylamino)uracil binding. Position 130 (Arg-130) interacts with (2S)-2-hydroxy-3-oxobutyl phosphate.

It belongs to the DMRL synthase family.

It catalyses the reaction (2S)-2-hydroxy-3-oxobutyl phosphate + 5-amino-6-(D-ribitylamino)uracil = 6,7-dimethyl-8-(1-D-ribityl)lumazine + phosphate + 2 H2O + H(+). It functions in the pathway cofactor biosynthesis; riboflavin biosynthesis; riboflavin from 2-hydroxy-3-oxobutyl phosphate and 5-amino-6-(D-ribitylamino)uracil: step 1/2. Catalyzes the formation of 6,7-dimethyl-8-ribityllumazine by condensation of 5-amino-6-(D-ribitylamino)uracil with 3,4-dihydroxy-2-butanone 4-phosphate. This is the penultimate step in the biosynthesis of riboflavin. The chain is 6,7-dimethyl-8-ribityllumazine synthase from Nitratidesulfovibrio vulgaris (strain ATCC 29579 / DSM 644 / CCUG 34227 / NCIMB 8303 / VKM B-1760 / Hildenborough) (Desulfovibrio vulgaris).